The following is a 171-amino-acid chain: S-ribosylhomocysteine lyase (171 aa).

The Fe cation site is built by His54, His58, and Cys128.

This sequence belongs to the LuxS family. Homodimer. Fe cation is required as a cofactor.

The catalysed reaction is S-(5-deoxy-D-ribos-5-yl)-L-homocysteine = (S)-4,5-dihydroxypentane-2,3-dione + L-homocysteine. Involved in the synthesis of autoinducer 2 (AI-2) which is secreted by bacteria and is used to communicate both the cell density and the metabolic potential of the environment. The regulation of gene expression in response to changes in cell density is called quorum sensing. Catalyzes the transformation of S-ribosylhomocysteine (RHC) to homocysteine (HC) and 4,5-dihydroxy-2,3-pentadione (DPD). This is S-ribosylhomocysteine lyase from Salmonella arizonae (strain ATCC BAA-731 / CDC346-86 / RSK2980).